We begin with the raw amino-acid sequence, 365 residues long: tRNA 2-selenouridine synthase (365 aa).

The 123-residue stretch at 16–138 (FLLKTPLIDL…LRRYLINVID (123 aa)) folds into the Rhodanese domain. Catalysis depends on cysteine 98, which acts as the S-selanylcysteine intermediate.

This sequence belongs to the SelU family. Monomer.

It catalyses the reaction 5-methylaminomethyl-2-thiouridine(34) in tRNA + selenophosphate + (2E)-geranyl diphosphate + H2O + H(+) = 5-methylaminomethyl-2-selenouridine(34) in tRNA + (2E)-thiogeraniol + phosphate + diphosphate. It carries out the reaction 5-methylaminomethyl-2-thiouridine(34) in tRNA + (2E)-geranyl diphosphate = 5-methylaminomethyl-S-(2E)-geranyl-thiouridine(34) in tRNA + diphosphate. The enzyme catalyses 5-methylaminomethyl-S-(2E)-geranyl-thiouridine(34) in tRNA + selenophosphate + H(+) = 5-methylaminomethyl-2-(Se-phospho)selenouridine(34) in tRNA + (2E)-thiogeraniol. The catalysed reaction is 5-methylaminomethyl-2-(Se-phospho)selenouridine(34) in tRNA + H2O = 5-methylaminomethyl-2-selenouridine(34) in tRNA + phosphate. In terms of biological role, involved in the post-transcriptional modification of the uridine at the wobble position (U34) of tRNA(Lys), tRNA(Glu) and tRNA(Gln). Catalyzes the conversion of 2-thiouridine (S2U-RNA) to 2-selenouridine (Se2U-RNA). Acts in a two-step process involving geranylation of 2-thiouridine (S2U) to S-geranyl-2-thiouridine (geS2U) and subsequent selenation of the latter derivative to 2-selenouridine (Se2U) in the tRNA chain. This chain is tRNA 2-selenouridine synthase, found in Psychromonas ingrahamii (strain DSM 17664 / CCUG 51855 / 37).